A 648-amino-acid chain; its full sequence is 5-aminolevulinate synthase, mitochondrial (648 aa).

The transit peptide at 1–26 (MEALLQQSRAMCPFLKRSSPNTLRSL) directs the protein to the mitochondrion. Positions 69–109 (KRFTSSAAGVPGAGAGTPKPTRGSPGKRALHSTGGNGANMS) are disordered. Substrate contacts are provided by Arg-170, Ser-283, and Lys-302. Positions 335, 363, and 409 each coordinate pyridoxal 5'-phosphate. Lys-412 is a catalytic residue. Lys-412 carries the post-translational modification N6-(pyridoxal phosphate)lysine. Positions 441 and 442 each coordinate pyridoxal 5'-phosphate. Thr-527 contributes to the substrate binding site.

It belongs to the class-II pyridoxal-phosphate-dependent aminotransferase family. As to quaternary structure, homodimer. Requires pyridoxal 5'-phosphate as cofactor.

It is found in the mitochondrion matrix. It carries out the reaction succinyl-CoA + glycine + H(+) = 5-aminolevulinate + CO2 + CoA. It functions in the pathway porphyrin-containing compound metabolism; protoporphyrin-IX biosynthesis; 5-aminolevulinate from glycine: step 1/1. Catalyzes the synthesis of 5-aminolevulinate (ALA) from succinyl-CoA and glycine, the first and rate-limiting step in heme biosynthesis. This chain is 5-aminolevulinate synthase, mitochondrial (hemA), found in Emericella nidulans (strain FGSC A4 / ATCC 38163 / CBS 112.46 / NRRL 194 / M139) (Aspergillus nidulans).